A 216-amino-acid chain; its full sequence is Cytidylate kinase (216 aa).

11–19 (GPAGAGKGT) contacts ATP.

This sequence belongs to the cytidylate kinase family. Type 1 subfamily.

It is found in the cytoplasm. The catalysed reaction is CMP + ATP = CDP + ADP. It catalyses the reaction dCMP + ATP = dCDP + ADP. The protein is Cytidylate kinase of Mesorhizobium japonicum (strain LMG 29417 / CECT 9101 / MAFF 303099) (Mesorhizobium loti (strain MAFF 303099)).